Consider the following 860-residue polypeptide: DNA mismatch repair protein MutS (860 aa).

607–614 (GPNMSGKS) is a binding site for ATP.

This sequence belongs to the DNA mismatch repair MutS family.

Its function is as follows. This protein is involved in the repair of mismatches in DNA. It is possible that it carries out the mismatch recognition step. This protein has a weak ATPase activity. The sequence is that of DNA mismatch repair protein MutS from Listeria monocytogenes serovar 1/2a (strain ATCC BAA-679 / EGD-e).